A 1315-amino-acid polypeptide reads, in one-letter code: Tetratricopeptide repeat protein 21B (1315 aa).

TPR repeat units follow at residues 108–141, 145–178, 192–225, 285–323, 324–357, 492–525, 563–596, 616–649, 721–754, 756–788, 790–821, 830–863, 883–916, 918–950, 951–984, 1022–1055, 1196–1229, 1231–1263, and 1265–1298; these read RKAL…PHDS, PILK…GNDI, QNYS…QLAL, AQLF…TPQQ, AEIA…NESN, PQAV…SPSY, PLYH…PGMR, LSIF…FSGT, PRSF…NPKD, TLAR…GQQN, LCYD…EPVS, GRSQ…QARI, AEIC…CETD, KIML…DQDN, EPAT…KPDN, PGFQ…SDWG, EKSW…NRSC, KAYE…SNQT, and PAVG…HPTY.

This sequence belongs to the TTC21 family. Component of the IFT complex A (IFT-A) complex. IFT-A complex is divided into a core subcomplex composed of IFT122:IFT140:WDR19 which is associated with TULP3 and a peripheral subcomplex composed of IFT43:WDR35:TTC21B. Interacts directy with WDR35 and TTC21B. Interacts with TTC25.

It is found in the cytoplasm. It localises to the cytoskeleton. The protein localises to the cilium axoneme. Component of the IFT complex A (IFT-A), a complex required for retrograde ciliary transport and entry into cilia of G protein-coupled receptors (GPCRs). Essential for retrograde trafficking of IFT-1, IFT-B and GPCRs. Negatively modulates the SHH signal transduction. In Mus musculus (Mouse), this protein is Tetratricopeptide repeat protein 21B (Ttc21b).